The chain runs to 437 residues: Aminopeptidase G (437 aa).

Active-site residues include C70, H361, and N382.

This sequence belongs to the peptidase C1 family.

The protein localises to the cytoplasm. The polypeptide is Aminopeptidase G (pepG) (Lactobacillus delbrueckii subsp. lactis).